A 90-amino-acid polypeptide reads, in one-letter code: Acylphosphatase (90 aa).

Positions Ala-3 to Gly-90 constitute an Acylphosphatase-like domain. Active-site residues include Arg-18 and Asn-36.

It belongs to the acylphosphatase family.

The catalysed reaction is an acyl phosphate + H2O = a carboxylate + phosphate + H(+). This is Acylphosphatase (acyP) from Leuconostoc mesenteroides subsp. mesenteroides (strain ATCC 8293 / DSM 20343 / BCRC 11652 / CCM 1803 / JCM 6124 / NCDO 523 / NBRC 100496 / NCIMB 8023 / NCTC 12954 / NRRL B-1118 / 37Y).